The primary structure comprises 514 residues: 2-isopropylmalate synthase (514 aa).

A Pyruvate carboxyltransferase domain is found at 5–268 (LIIFDTTLRD…DVGIDTSQIV (264 aa)). Mn(2+) contacts are provided by Asp14, His202, His204, and Asn239. The regulatory domain stretch occupies residues 395–514 (KFVSLSQHSE…KDDKVNPQRS (120 aa)).

The protein belongs to the alpha-IPM synthase/homocitrate synthase family. LeuA type 1 subfamily. In terms of assembly, homodimer. Requires Mn(2+) as cofactor.

It localises to the cytoplasm. It carries out the reaction 3-methyl-2-oxobutanoate + acetyl-CoA + H2O = (2S)-2-isopropylmalate + CoA + H(+). Its pathway is amino-acid biosynthesis; L-leucine biosynthesis; L-leucine from 3-methyl-2-oxobutanoate: step 1/4. Its function is as follows. Catalyzes the condensation of the acetyl group of acetyl-CoA with 3-methyl-2-oxobutanoate (2-ketoisovalerate) to form 3-carboxy-3-hydroxy-4-methylpentanoate (2-isopropylmalate). The polypeptide is 2-isopropylmalate synthase (Burkholderia lata (strain ATCC 17760 / DSM 23089 / LMG 22485 / NCIMB 9086 / R18194 / 383)).